The primary structure comprises 262 residues: Sulfite reductase, dissimilatory-type subunit beta (262 aa).

[4Fe-4S] cluster contacts are provided by cysteine 151, cysteine 188, cysteine 189, cysteine 193, cysteine 231, cysteine 258, and cysteine 261. Cysteine 193 contributes to the siroheme binding site.

In terms of assembly, heterohexamer of two alpha, two beta and two gamma subunits. [4Fe-4S] cluster is required as a cofactor. Siroheme serves as cofactor.

The enzyme catalyses [DsrC protein]-trisulfide + NAD(+) + 3 H2O = [DsrC protein]-dithiol + sulfite + NADH + 3 H(+). In terms of biological role, catalyzes the reduction of sulfite to sulfide. This is the terminal oxidation reaction in sulfate respiration, a process catalyzed by the sulfate-reducing bacteria. This chain is Sulfite reductase, dissimilatory-type subunit beta (dsrB), found in Megalodesulfovibrio gigas (strain ATCC 19364 / DSM 1382 / NCIMB 9332 / VKM B-1759) (Desulfovibrio gigas).